A 354-amino-acid chain; its full sequence is Nicotinate-nucleotide--dimethylbenzimidazole phosphoribosyltransferase (354 aa).

Glu319 (proton acceptor) is an active-site residue.

Belongs to the CobT family.

The enzyme catalyses 5,6-dimethylbenzimidazole + nicotinate beta-D-ribonucleotide = alpha-ribazole 5'-phosphate + nicotinate + H(+). The protein operates within nucleoside biosynthesis; alpha-ribazole biosynthesis; alpha-ribazole from 5,6-dimethylbenzimidazole: step 1/2. Functionally, catalyzes the synthesis of alpha-ribazole-5'-phosphate from nicotinate mononucleotide (NAMN) and 5,6-dimethylbenzimidazole (DMB). This is Nicotinate-nucleotide--dimethylbenzimidazole phosphoribosyltransferase from Pelodictyon phaeoclathratiforme (strain DSM 5477 / BU-1).